A 1103-amino-acid chain; its full sequence is PALM2-AKAP2 fusion protein (1103 aa).

Disordered stretches follow at residues 178 to 197 (ESAS…KKPP) and 304 to 396 (YNGT…SSRD). Positions 179–189 (SASNATETSGP) are enriched in polar residues. A phosphoserine mark is found at Ser-322, Ser-352, and Ser-383. The segment covering 380–392 (VPVSPSSTTSSRC) has biased composition (low complexity). Residue Lys-405 forms a Glycyl lysine isopeptide (Lys-Gly) (interchain with G-Cter in SUMO1); alternate linkage. Lys-405 participates in a covalent cross-link: Glycyl lysine isopeptide (Lys-Gly) (interchain with G-Cter in SUMO2); alternate. The stretch at 444–521 (EEMLELEKER…QKQLQQQQQQ (78 aa)) forms a coiled coil. 2 disordered regions span residues 483–544 (EQLD…DKAK) and 566–662 (NSRQ…SKLW). Basic and acidic residues predominate over residues 490–505 (LESHKKYKERKERRAQ). Residues 506–521 (QEQLLLQKQLQQQQQQ) are compositionally biased toward low complexity. Polar residues predominate over residues 522–531 (PPSQLCTAPA). The segment covering 533–544 (SHERASMIDKAK) has biased composition (basic and acidic residues). The segment covering 566 to 579 (NSRQAVAKGQSTPR) has biased composition (polar residues). Ser-567 and Ser-624 each carry phosphoserine. Residues 633-643 (AAGSQGNTASQ) are compositionally biased toward polar residues. 3 positions are modified to phosphoserine: Ser-692, Ser-696, and Ser-748. The segment covering 745-763 (QENSLADFSLPQTPQTDNP) has biased composition (polar residues). Residues 745–794 (QENSLADFSLPQTPQTDNPSEGRGEGVSKSFSDHGFYSPSSTLGDSPLVD) form a disordered region. Residue Thr-757 is modified to Phosphothreonine. The interval 797 to 810 (LEYQAGLLVQNAIQ) is PKA-RII subunit binding domain. A compositionally biased stretch (basic and acidic residues) spans 817–829 (VDKAVSKTSRDGA). The tract at residues 817–907 (VDKAVSKTSR…GPINMEETRP (91 aa)) is disordered. Residue Ser-862 is modified to Phosphoserine. Positions 865–886 (QEKRDVLPKILPAEDRALRERG) are enriched in basic and acidic residues. Positions 941–979 (KLRSRKQRTLSMIEEEIRAAQEREEELKRQRQVLQSTQS) form a coiled coil. A phosphoserine mark is found at Ser-951, Ser-979, Ser-1009, and Ser-1016. Residues 962-1035 (EREEELKRQR…AAGTQRPKNL (74 aa)) form a disordered region. The segment covering 976–990 (STQSPRTKNAPSLPS) has biased composition (polar residues).

As to expression, expressed in infantile heart and muscle, and fibroblasts.

It is found in the apical cell membrane. In terms of biological role, binds to regulatory subunit (RII) of protein kinase A. May be involved in establishing polarity in signaling systems or in integrating PKA-RII isoforms with downstream effectors to capture, amplify and focus diffuse, trans-cellular signals carried by cAMP. Binds to and modulates the structure of the actin cytoskeleton. This is PALM2-AKAP2 fusion protein from Homo sapiens (Human).